A 343-amino-acid polypeptide reads, in one-letter code: Transmembrane protein 120A (343 aa).

At 1–135 (MQSPPPDPLG…KFAYKDEYEK (135 aa)) the chain is on the cytoplasmic side. K130 lines the CoA pocket. The helical transmembrane segment at 136-156 (FKLYLTIILIVISFTCRFLLN) threads the bilayer. Residues 157–162 (SRVTDA) lie on the Extracellular side of the membrane. The helical transmembrane segment at 163–183 (AFNFLLVWYYCTLTIRESILI) threads the bilayer. The Cytoplasmic segment spans residues 184 to 190 (NNGSRIK). The CoA site is built by S187 and R188. A helical membrane pass occupies residues 191-211 (GWWVFHHYVSTFLSGVMLTWP). Residues 212–222 (DGLMYQKFRNQ) are Extracellular-facing. A helical membrane pass occupies residues 223 to 240 (FLSFSMYQSFVQFLQYYY). Residues Q237, Y240, Q241, and H283 each coordinate CoA. Topologically, residues 241-273 (QSGCLYRLRALGERHTMDLTVEGFQSWMWRGLT) are cytoplasmic. Residues 274-294 (FLLPFLFFGHFWQLFNALTLF) traverse the membrane as a helical segment. Topologically, residues 295–305 (NLARDPECKEW) are extracellular. A helical transmembrane segment spans residues 306 to 326 (QVLMCGFPFLLLFLGNFFTTL). The Cytoplasmic segment spans residues 327–343 (RVVHQKFHSQQHGNKKD). Residue K332 participates in CoA binding.

The protein belongs to the TMEM120 family. Homodimer. Forms heterooligomer with TMEM120B. Interacts with PKD2; TMEM120A inhibits PKD2 channel activity through the physical association of PKD2 with TMEM120A. In terms of tissue distribution, widely expressed, with higher expression in the heart, kidneys, colon and sensory neurons of the dorsal root ganglia. Expressed in nociceptors. Highly expressed in white adipose tissue (at protein level). Highly expressed in brown adipose tissue and expressed at low levels in liver.

It localises to the cell membrane. Its subcellular location is the nucleus envelope. It is found in the nucleus inner membrane. The protein resides in the endoplasmic reticulum. Multifunctional protein involved in mechanosensation, and plays an essential role in lipid metabolism and adipocyte differentiation. May function as a potential ion channel involved in sensing mechanical stimuli. Mediates the mechanosensitivity of the PKD2-TMEM120A channel complex through direct physical interaction. TMEM120A seems to affect mechanosensation by inhibiting PIEZO2 channels, possibly by altering cellular lipid content. TMEM120A is structurally similar to a lipid-modifying enzyme, ELOVL7, and contains a bound coenzyme A molecule, which suggests it might function as an enzyme in lipid metabolism. The protein is Transmembrane protein 120A of Mus musculus (Mouse).